We begin with the raw amino-acid sequence, 85 residues long: Small ribosomal subunit protein bS18c (85 aa).

Belongs to the bacterial ribosomal protein bS18 family. As to quaternary structure, part of the 30S ribosomal subunit.

The protein resides in the plastid. It is found in the chloroplast. In Zygnema circumcarinatum (Green alga), this protein is Small ribosomal subunit protein bS18c.